We begin with the raw amino-acid sequence, 377 residues long: Nitric oxide reductase FlRd-NAD(+) reductase (377 aa).

It belongs to the FAD-dependent oxidoreductase family. Requires FAD as cofactor.

It localises to the cytoplasm. It catalyses the reaction 2 reduced [nitric oxide reductase rubredoxin domain] + NAD(+) + H(+) = 2 oxidized [nitric oxide reductase rubredoxin domain] + NADH. It functions in the pathway nitrogen metabolism; nitric oxide reduction. One of at least two accessory proteins for anaerobic nitric oxide (NO) reductase. Reduces the rubredoxin moiety of NO reductase. The protein is Nitric oxide reductase FlRd-NAD(+) reductase of Salmonella typhimurium (strain LT2 / SGSC1412 / ATCC 700720).